The following is a 274-amino-acid chain: Large ribosomal subunit protein uL2 (274 aa).

Residues 223–264 (VAMNPVDHPHGGGEGRTSGGRHPVSPWGVPTKGYKTRSNKRT) form a disordered region.

Belongs to the universal ribosomal protein uL2 family. Part of the 50S ribosomal subunit. Forms a bridge to the 30S subunit in the 70S ribosome.

Its function is as follows. One of the primary rRNA binding proteins. Required for association of the 30S and 50S subunits to form the 70S ribosome, for tRNA binding and peptide bond formation. It has been suggested to have peptidyltransferase activity; this is somewhat controversial. Makes several contacts with the 16S rRNA in the 70S ribosome. The sequence is that of Large ribosomal subunit protein uL2 from Shewanella denitrificans (strain OS217 / ATCC BAA-1090 / DSM 15013).